A 274-amino-acid polypeptide reads, in one-letter code: 4-hydroxy-3-methylbut-2-enyl diphosphate reductase (274 aa).

Cys12 lines the [4Fe-4S] cluster pocket. Positions 36 and 70 each coordinate (2E)-4-hydroxy-3-methylbut-2-enyl diphosphate. 2 residues coordinate dimethylallyl diphosphate: His36 and His70. Positions 36 and 70 each coordinate isopentenyl diphosphate. Residue Cys92 coordinates [4Fe-4S] cluster. His120 is a binding site for (2E)-4-hydroxy-3-methylbut-2-enyl diphosphate. Residue His120 coordinates dimethylallyl diphosphate. His120 contributes to the isopentenyl diphosphate binding site. The Proton donor role is filled by Glu122. Position 158 (Thr158) interacts with (2E)-4-hydroxy-3-methylbut-2-enyl diphosphate. Cys186 serves as a coordination point for [4Fe-4S] cluster. 4 residues coordinate (2E)-4-hydroxy-3-methylbut-2-enyl diphosphate: Ser214, Ser215, Asn216, and Ser258. Dimethylallyl diphosphate contacts are provided by Ser214, Ser215, Asn216, and Ser258. The isopentenyl diphosphate site is built by Ser214, Ser215, Asn216, and Ser258.

The protein belongs to the IspH family. [4Fe-4S] cluster is required as a cofactor.

It catalyses the reaction isopentenyl diphosphate + 2 oxidized [2Fe-2S]-[ferredoxin] + H2O = (2E)-4-hydroxy-3-methylbut-2-enyl diphosphate + 2 reduced [2Fe-2S]-[ferredoxin] + 2 H(+). The catalysed reaction is dimethylallyl diphosphate + 2 oxidized [2Fe-2S]-[ferredoxin] + H2O = (2E)-4-hydroxy-3-methylbut-2-enyl diphosphate + 2 reduced [2Fe-2S]-[ferredoxin] + 2 H(+). It participates in isoprenoid biosynthesis; dimethylallyl diphosphate biosynthesis; dimethylallyl diphosphate from (2E)-4-hydroxy-3-methylbutenyl diphosphate: step 1/1. The protein operates within isoprenoid biosynthesis; isopentenyl diphosphate biosynthesis via DXP pathway; isopentenyl diphosphate from 1-deoxy-D-xylulose 5-phosphate: step 6/6. In terms of biological role, catalyzes the conversion of 1-hydroxy-2-methyl-2-(E)-butenyl 4-diphosphate (HMBPP) into a mixture of isopentenyl diphosphate (IPP) and dimethylallyl diphosphate (DMAPP). Acts in the terminal step of the DOXP/MEP pathway for isoprenoid precursor biosynthesis. The polypeptide is 4-hydroxy-3-methylbut-2-enyl diphosphate reductase (Helicobacter pylori (strain P12)).